The chain runs to 334 residues: MASALCRTASRLRSVQLFRRIRVSSDLLSASSPSPACISDALRHGDFSLPRSFFSLNCGIEMLKMDQRCLLSTSASDTTSKHDSGKPETKSSEKNEKSGGSESSDGGSDHKNERASGKDVRGGPVSWMSFFLLFATGAGLVYYYDTQKKRHIEDINKNSIAVKEGPSAGKAAIGGPFSLIRDDGKRVTEKNLMGKWTILYFGFTHCPDICPDELIKLAAAIDKIKENSGVDVVPVFISVDPERDTVQQVHEYVKEFHPKLIGLTGSPEEIKSVARSYRVYYMKTEEEDSDYLVDHSIVMYLMSPEMNFVKFYGKNHDVDSLTDGVVKEIRQYRK.

Residues 1–13 constitute a mitochondrion transit peptide; the sequence is MASALCRTASRLR. The segment at 74-120 is disordered; sequence SASDTTSKHDSGKPETKSSEKNEKSGGSESSDGGSDHKNERASGKDV. Composition is skewed to basic and acidic residues over residues 79–99 and 107–120; these read TSKH…EKSG and GSDH…GKDV. Residues 125–144 form a helical membrane-spanning segment; that stretch reads VSWMSFFLLFATGAGLVYYY. The Thioredoxin domain maps to 166–331; sequence PSAGKAAIGG…TDGVVKEIRQ (166 aa). Cu cation contacts are provided by C206, C210, and H295.

It belongs to the SCO1/2 family. Expressed in the whole plant with highest expression in imbibed seeds, embryos, endosperm, and root tips.

The protein localises to the mitochondrion inner membrane. Functionally, thought to play a role in cellular copper homeostasis, mitochondrial redox signaling or insertion of copper into the active site of COX. Plays an essential role in embryo development. The sequence is that of Protein SCO1 homolog 1, mitochondrial (HCC1) from Arabidopsis thaliana (Mouse-ear cress).